We begin with the raw amino-acid sequence, 493 residues long: Galactose-1-phosphate uridylyltransferase (493 aa).

It belongs to the galactose-1-phosphate uridylyltransferase type 2 family.

Its subcellular location is the cytoplasm. The enzyme catalyses alpha-D-galactose 1-phosphate + UDP-alpha-D-glucose = alpha-D-glucose 1-phosphate + UDP-alpha-D-galactose. It functions in the pathway carbohydrate metabolism; galactose metabolism. The sequence is that of Galactose-1-phosphate uridylyltransferase (galT) from Lactococcus lactis subsp. lactis (strain IL1403) (Streptococcus lactis).